Consider the following 177-residue polypeptide: Peptide deformylase (177 aa).

2 residues coordinate Fe cation: Cys-98 and His-140. Residue Glu-141 is part of the active site. His-144 contacts Fe cation.

Belongs to the polypeptide deformylase family. It depends on Fe(2+) as a cofactor.

The enzyme catalyses N-terminal N-formyl-L-methionyl-[peptide] + H2O = N-terminal L-methionyl-[peptide] + formate. In terms of biological role, removes the formyl group from the N-terminal Met of newly synthesized proteins. Requires at least a dipeptide for an efficient rate of reaction. N-terminal L-methionine is a prerequisite for activity but the enzyme has broad specificity at other positions. The chain is Peptide deformylase from Zymomonas mobilis subsp. mobilis (strain ATCC 31821 / ZM4 / CP4).